Here is a 1378-residue protein sequence, read N- to C-terminus: High molecular weight rhoptry protein 2 (1378 aa).

Residues 1–19 form the signal peptide; the sequence is MIKVTIFLLLSIFSFNLYG. Disulfide bonds link Cys-46-Cys-71 and Cys-233-Cys-240. A helical transmembrane segment spans residues 739-759; that stretch reads FVYASYILGLVFFIESHIDIA. 3 disulfide bridges follow: Cys-791-Cys-851, Cys-871-Cys-912, and Cys-947-Cys-1034.

As to quaternary structure, component of the RhopH complex. RhopH complex is composed of CLAG3.1/CLAG3.2, RhopH2 and RhopH3 with a 1:1:1 subunit stoichiometry. Interacts with CLAG3.1/CLAG3.2.

Its subcellular location is the host cell membrane. It is found in the parasitophorous vacuole membrane. The protein localises to the host cytoplasm. The protein resides in the cytoplasm. It localises to the cytoplasmic vesicle. Its subcellular location is the secretory vesicle. It is found in the rhoptry. In terms of biological role, participates in the formation of new permeability pathways in Plasmodium-infected erythrocytes enabling the uptake of nutrients from the blood plasma. Required for maintaining invasion capacity of merozoites. Required for parasite growth and proliferation. In Plasmodium falciparum (isolate 3D7), this protein is High molecular weight rhoptry protein 2.